A 162-amino-acid chain; its full sequence is NADH-quinone oxidoreductase subunit I (162 aa).

4Fe-4S ferredoxin-type domains follow at residues Leu52–Gly82 and Thr93–Asn122. [4Fe-4S] cluster-binding residues include Cys62, Cys65, Cys68, Cys72, Cys102, Cys105, Cys108, and Cys112.

This sequence belongs to the complex I 23 kDa subunit family. NDH-1 is composed of 14 different subunits. Subunits NuoA, H, J, K, L, M, N constitute the membrane sector of the complex. Requires [4Fe-4S] cluster as cofactor.

The protein localises to the cell inner membrane. It carries out the reaction a quinone + NADH + 5 H(+)(in) = a quinol + NAD(+) + 4 H(+)(out). In terms of biological role, NDH-1 shuttles electrons from NADH, via FMN and iron-sulfur (Fe-S) centers, to quinones in the respiratory chain. The immediate electron acceptor for the enzyme in this species is believed to be ubiquinone. Couples the redox reaction to proton translocation (for every two electrons transferred, four hydrogen ions are translocated across the cytoplasmic membrane), and thus conserves the redox energy in a proton gradient. In Methylocella silvestris (strain DSM 15510 / CIP 108128 / LMG 27833 / NCIMB 13906 / BL2), this protein is NADH-quinone oxidoreductase subunit I.